The following is a 235-amino-acid chain: Transcription factor MYB59 (235 aa).

2 consecutive HTH myb-type domains span residues 5 to 57 (QEEY…VNYL) and 58 to 112 (HPGL…RKKA). The H-T-H motif DNA-binding region spans 33–57 (WDFVAKVSGLNRTGKSCRLRWVNYL). The Bipartite nuclear localization signal 1 signature appears at 62 to 65 (KRGK). The segment at residues 85-108 (WSKIARKLPGRTDNEIKNYWRTHM) is a DNA-binding region (H-T-H motif). Residues 109 to 117 (RKKAQEKKR) carry the Bipartite nuclear localization signal 2 motif. Positions 109–147 (RKKAQEKKRPMSPTSSSSNCCSSSMTTTTSQDTGGSNGK) are disordered. Residues 119–138 (MSPTSSSSNCCSSSMTTTTS) show a composition bias toward low complexity.

In terms of tissue distribution, mainly expressed in leaves and seedlings, and to a lower extent, in roots, stems and inflorescences. Isoform MYB59-1 and isoform MYB59-2 are present in roots, leaves, and seedlings, while the expression of isoform MYB59-3 and isoform MYB59-4 is confined to seedlings.

The protein resides in the nucleus. Its function is as follows. Transcription factor. The protein is Transcription factor MYB59 (MYB59) of Arabidopsis thaliana (Mouse-ear cress).